A 366-amino-acid polypeptide reads, in one-letter code: NADH-quinone oxidoreductase subunit D (366 aa).

It belongs to the complex I 49 kDa subunit family. As to quaternary structure, NDH-1 is composed of 14 different subunits. Subunits NuoB, C, D, E, F, and G constitute the peripheral sector of the complex.

The protein resides in the cell membrane. The enzyme catalyses a quinone + NADH + 5 H(+)(in) = a quinol + NAD(+) + 4 H(+)(out). NDH-1 shuttles electrons from NADH, via FMN and iron-sulfur (Fe-S) centers, to quinones in the respiratory chain. The immediate electron acceptor for the enzyme in this species is believed to be a menaquinone. Couples the redox reaction to proton translocation (for every two electrons transferred, four hydrogen ions are translocated across the cytoplasmic membrane), and thus conserves the redox energy in a proton gradient. The polypeptide is NADH-quinone oxidoreductase subunit D (Desulforamulus reducens (strain ATCC BAA-1160 / DSM 100696 / MI-1) (Desulfotomaculum reducens)).